A 134-amino-acid chain; its full sequence is Small ribosomal subunit protein uS11 (134 aa).

Belongs to the universal ribosomal protein uS11 family. In terms of assembly, component of the small ribosomal subunit.

It is found in the cytoplasm. The protein is Small ribosomal subunit protein uS11 (RPS14) of Encephalitozoon cuniculi (strain GB-M1) (Microsporidian parasite).